The primary structure comprises 155 residues: Photosystem II extrinsic protein V (155 aa).

The first 20 residues, 1–20 (MFVKMIGWLVLFLFAHQTWA), serve as a signal peptide directing secretion. Residues Cys50, Cys53, His54, and His105 each contribute to the heme c site.

Belongs to the cytochrome c family. PsbV subfamily. As to quaternary structure, PSII is composed of 1 copy each of membrane proteins PsbA, PsbB, PsbC, PsbD, PsbE, PsbF, PsbH, PsbI, PsbJ, PsbK, PsbL, PsbM, PsbT, PsbY, PsbZ, Psb30/Ycf12, at least 3 peripheral proteins of the oxygen-evolving complex and a large number of cofactors. It forms dimeric complexes. The extrinsic subunits in red algae are PsbO (OEC33), PsbQ', cytochrome c-550 and PsbU. Heme c serves as cofactor.

The protein resides in the plastid. It is found in the chloroplast thylakoid membrane. In terms of biological role, one of the extrinsic, lumenal subunits of photosystem II (PSII). PSII is a light-driven water plastoquinone oxidoreductase, using light energy to abstract electrons from H(2)O, generating a proton gradient subsequently used for ATP formation. The extrinsic proteins stabilize the structure of photosystem II oxygen-evolving complex (OEC), the ion environment of oxygen evolution and protect the OEC against heat-induced inactivation. Unlike the T.vulcanus ortholog, it does not bind by itself to PSII, but requires all extrinsic members of the OEC. This chain is Photosystem II extrinsic protein V, found in Cyanidium caldarium (Red alga).